The following is a 498-amino-acid chain: Glutamate--tRNA ligase (498 aa).

The short motif at proline 10–glycine 20 is the 'HIGH' region element. The 'KMSKS' region signature appears at lysine 252–arginine 256. Lysine 255 is a binding site for ATP.

The protein belongs to the class-I aminoacyl-tRNA synthetase family. Glutamate--tRNA ligase type 1 subfamily. As to quaternary structure, monomer.

The protein resides in the cytoplasm. The catalysed reaction is tRNA(Glu) + L-glutamate + ATP = L-glutamyl-tRNA(Glu) + AMP + diphosphate. Its function is as follows. Catalyzes the attachment of glutamate to tRNA(Glu) in a two-step reaction: glutamate is first activated by ATP to form Glu-AMP and then transferred to the acceptor end of tRNA(Glu). This is Glutamate--tRNA ligase from Mycoplasmoides gallisepticum (strain R(low / passage 15 / clone 2)) (Mycoplasma gallisepticum).